A 741-amino-acid chain; its full sequence is Prestin (741 aa).

Residues 1-79 (MDHVEETEIL…WLPAYRFKEY (79 aa)) are Cytoplasmic-facing. A helical membrane pass occupies residues 80–105 (VLGDIVSGISTGVLQLPQGLAFAMLA). Residues 106-109 (AVPP) are Extracellular-facing. Residues 110-125 (VFGLYSSFYPVIMYCF) traverse the membrane as a helical segment. Residues 126–137 (FGTSRHISIGPF) are Cytoplasmic-facing. Residues 138–147 (AVISLMIGGV) form a helical membrane-spanning segment. Residues 148-178 (AVRLVPDDIVIPGGVNATNSTEARDALRVKV) are Extracellular-facing. An Involved in motor function motif is present at residues 158 to 168 (IPGGVNATNST). N-linked (GlcNAc...) asparagine glycans are attached at residues asparagine 163 and asparagine 166. 2 helical membrane-spanning segments follow: residues 179 to 208 (AMSVTLLTGIIQFCLGVCRFGFVAIYLTEP) and 209 to 230 (LVRGFTTAAAVHVFTSMLKYLF). Residues 231-243 (GVKTKRYSGIFSV) are Extracellular-facing. An intramembrane region (helical) is located at residues 244 to 248 (VYSTV). At 249-261 (AVLQNVKNLNVCS) the chain is on the extracellular side. Residues 262–283 (LGVGLMVFGLLLGGKEFNERFK) form a helical membrane-spanning segment. At 284–291 (EKLPAPIP) the chain is on the cytoplasmic side. Residues 292 to 303 (LEFFAVVMGTGI) form a helical membrane-spanning segment. Topologically, residues 304–338 (SAGFSLHESYNVDVVGTLPLGLLPPANPDTSLFHL) are extracellular. The helical transmembrane segment at 339–361 (VYVDAIAIAIVGFSVTISMAKTL) threads the bilayer. The Cytoplasmic segment spans residues 362-370 (ANKHGYQVD). The helical transmembrane segment at 371 to 388 (GNQELIALGLCNSTGSLF) threads the bilayer. Residues 389–396 (QTFAISCS) lie on the Extracellular side of the membrane. A helical membrane pass occupies residues 397–406 (LSRSLVQEGT). Residue serine 398 participates in salicylate binding. Topologically, residues 407 to 410 (GGKT) are cytoplasmic. The chain crosses the membrane as a helical span at residues 411–429 (QLAGCLASLMILLVILATG). The Extracellular portion of the chain corresponds to 430 to 436 (FLFESLP). A helical membrane pass occupies residues 437-459 (QAVLSAIVIVNLKGMFMQFSDLP). Topologically, residues 460–467 (FFWRTSKI) are cytoplasmic. The helical transmembrane segment at 468–483 (ELTIWLTTFVSSLFLG) threads the bilayer. A topological domain (extracellular) is located at residue leucine 484. Residues 485 to 498 (DYGLITAVIIALMT) traverse the membrane as a helical segment. Residues 499–741 (VIYRTQSPSY…DSEPNATPEA (243 aa)) are Cytoplasmic-facing. Positions 505-718 (SPSYIVLGQL…AVLGSQVREA (214 aa)) are extended region for STAS domain. Residues 525-713 (AYEEVKEVPG…HSIHDAVLGS (189 aa)) enclose the STAS domain. The disordered stretch occupies residues 718–741 (ALAEQEATAAPPQEDSEPNATPEA). The span at 721-730 (EQEATAAPPQ) shows a compositional bias: low complexity.

Belongs to the SLC26A/SulP transporter (TC 2.A.53) family. In terms of assembly, homodimer. Interacts (via STAS domain) with CALM; this interaction is calcium-dependent and the STAS domain interacts with only one lobe of CALM which is an elongated conformation.

The protein resides in the cell membrane. It catalyses the reaction 2 hydrogencarbonate(in) + chloride(out) = 2 hydrogencarbonate(out) + chloride(in). Functionally, voltage-sensitive motor protein that drives outer hair cell (OHC) electromotility (eM) and participates in sound amplification in the hearing organ. Converts changes in the transmembrane electric potential into mechanical displacements resulting in the coupling of its expansion to movement of a charged voltage sensor across the lipid membrane. The nature of the voltage sensor is not completely clear, and two models compete. In the first model, acts as an incomplete transporter where intracellular chloride anion acts as extrinsic voltage sensor that drives conformational change in the protein which is sufficient to produce a length change in the plane of the membrane and hence in the length of the OHC. The second model in which multiple charged amino acid residues are distributed at the intracellular and extracellular membrane interfaces that form an intrinsic voltage sensor, whose movement produces the non-linear capacitance (NLC). However, the effective voltage sensor may be the result of a hybrid voltage sensor assembled from intrinsic charge (charged residues) and extrinsic charge (bound anion). Notably, binding of anions to the anion-binding pocket partially neutralizes the intrinsic positive charge rather than to form an electrically negative sensor, therefore remaining charge may serve as voltage sensor that, after depolarization, moves from down (expanded state) to up (contracted) conformation, which is accompanied by an eccentric contraction of the intermembrane cross-sectional area of the protein as well as a major increase in the hydrophobic thickness of the protein having as consequences the plasma membrane thickening and the cell contraction after membrane depolarization. The anion-binding pocket transits from the inward-open (Down) state, where it is exposed toward the intracellular solvent in the absence of anion, to the occluded (Up) state upon anion binding. Salicylate competes for the anion-binding site and inhibits the voltage-sensor movement, and therefore inhibits the charge transfer and electromotility by displacing Cl(-) from the anion-binding site and by preventing the structural transitions to the contracted state. In addition, can act as a weak Cl(-)/HCO3 (-) antiporter across the cell membrane and so regulate the intracellular pH of the outer hair cells (OHCs), while firstly found as being unable to mediate electrogenic anion transport. Moreover, supports a role in cardiac mechanical amplification serving as an elastic element to enhance the actomyosin- based sarcomere contraction system. This is Prestin from Tursiops truncatus (Atlantic bottle-nosed dolphin).